We begin with the raw amino-acid sequence, 250 residues long: PF03932 family protein CutC (250 aa).

Belongs to the CutC family.

Its subcellular location is the cytoplasm. This is PF03932 family protein CutC from Vibrio vulnificus (strain YJ016).